The sequence spans 434 residues: Adenylosuccinate synthetase (434 aa).

GTP is bound by residues 15 to 21 (GDEGKGK) and 43 to 45 (GHT). Aspartate 16 functions as the Proton acceptor in the catalytic mechanism. 2 residues coordinate Mg(2+): aspartate 16 and glycine 43. IMP is bound by residues 16–19 (DEGK), 41–44 (NAGH), threonine 133, arginine 147, glutamine 228, threonine 243, and arginine 307. The active-site Proton donor is histidine 44. Substrate is bound at residue 303–309 (SVTGRAR). GTP is bound by residues arginine 309, 335–337 (KLD), and 418–420 (STG).

This sequence belongs to the adenylosuccinate synthetase family. Homodimer. Mg(2+) is required as a cofactor.

It localises to the cytoplasm. The catalysed reaction is IMP + L-aspartate + GTP = N(6)-(1,2-dicarboxyethyl)-AMP + GDP + phosphate + 2 H(+). It functions in the pathway purine metabolism; AMP biosynthesis via de novo pathway; AMP from IMP: step 1/2. Its function is as follows. Plays an important role in the de novo pathway of purine nucleotide biosynthesis. Catalyzes the first committed step in the biosynthesis of AMP from IMP. The sequence is that of Adenylosuccinate synthetase from Neisseria gonorrhoeae (strain NCCP11945).